A 429-amino-acid polypeptide reads, in one-letter code: Histidinol dehydrogenase (429 aa).

NAD(+) contacts are provided by Tyr127, Gln188, and Asn211. The substrate site is built by Ser234, Gln256, and His259. 2 residues coordinate Zn(2+): Gln256 and His259. Catalysis depends on proton acceptor residues Glu324 and His325. The substrate site is built by His325, Asp358, Glu412, and His417. Asp358 contributes to the Zn(2+) binding site. His417 contacts Zn(2+).

This sequence belongs to the histidinol dehydrogenase family. It depends on Zn(2+) as a cofactor.

The catalysed reaction is L-histidinol + 2 NAD(+) + H2O = L-histidine + 2 NADH + 3 H(+). The protein operates within amino-acid biosynthesis; L-histidine biosynthesis; L-histidine from 5-phospho-alpha-D-ribose 1-diphosphate: step 9/9. Functionally, catalyzes the sequential NAD-dependent oxidations of L-histidinol to L-histidinaldehyde and then to L-histidine. In Bacillus cereus (strain ATCC 14579 / DSM 31 / CCUG 7414 / JCM 2152 / NBRC 15305 / NCIMB 9373 / NCTC 2599 / NRRL B-3711), this protein is Histidinol dehydrogenase.